The sequence spans 849 residues: Protein translocase subunit SecA (849 aa).

ATP contacts are provided by residues Gln85, 103–107 (GEGKT), and Asp493. Zn(2+) contacts are provided by Cys832, Cys834, Cys843, and His844.

This sequence belongs to the SecA family. In terms of assembly, monomer and homodimer. Part of the essential Sec protein translocation apparatus which comprises SecA, SecYEG and auxiliary proteins SecDF. Other proteins may also be involved. Zn(2+) is required as a cofactor.

It localises to the cell membrane. The protein localises to the cytoplasm. It catalyses the reaction ATP + H2O + cellular proteinSide 1 = ADP + phosphate + cellular proteinSide 2.. In terms of biological role, part of the Sec protein translocase complex. Interacts with the SecYEG preprotein conducting channel. Has a central role in coupling the hydrolysis of ATP to the transfer of proteins into and across the cell membrane, serving as an ATP-driven molecular motor driving the stepwise translocation of polypeptide chains across the membrane. The chain is Protein translocase subunit SecA from Streptococcus thermophilus (strain ATCC BAA-250 / LMG 18311).